The following is a 282-amino-acid chain: 4-hydroxy-3-methylbut-2-enyl diphosphate reductase (282 aa).

Cysteine 14 contributes to the [4Fe-4S] cluster binding site. The (2E)-4-hydroxy-3-methylbut-2-enyl diphosphate site is built by histidine 43 and histidine 78. Dimethylallyl diphosphate is bound by residues histidine 43 and histidine 78. Isopentenyl diphosphate contacts are provided by histidine 43 and histidine 78. [4Fe-4S] cluster is bound at residue cysteine 100. Histidine 128 is a (2E)-4-hydroxy-3-methylbut-2-enyl diphosphate binding site. Histidine 128 is a dimethylallyl diphosphate binding site. Histidine 128 contributes to the isopentenyl diphosphate binding site. Glutamate 130 serves as the catalytic Proton donor. (2E)-4-hydroxy-3-methylbut-2-enyl diphosphate is bound at residue threonine 164. Cysteine 192 contributes to the [4Fe-4S] cluster binding site. Residues serine 220, serine 221, asparagine 222, and serine 266 each contribute to the (2E)-4-hydroxy-3-methylbut-2-enyl diphosphate site. 4 residues coordinate dimethylallyl diphosphate: serine 220, serine 221, asparagine 222, and serine 266. Positions 220, 221, 222, and 266 each coordinate isopentenyl diphosphate.

The protein belongs to the IspH family. Requires [4Fe-4S] cluster as cofactor.

It catalyses the reaction isopentenyl diphosphate + 2 oxidized [2Fe-2S]-[ferredoxin] + H2O = (2E)-4-hydroxy-3-methylbut-2-enyl diphosphate + 2 reduced [2Fe-2S]-[ferredoxin] + 2 H(+). The enzyme catalyses dimethylallyl diphosphate + 2 oxidized [2Fe-2S]-[ferredoxin] + H2O = (2E)-4-hydroxy-3-methylbut-2-enyl diphosphate + 2 reduced [2Fe-2S]-[ferredoxin] + 2 H(+). The protein operates within isoprenoid biosynthesis; dimethylallyl diphosphate biosynthesis; dimethylallyl diphosphate from (2E)-4-hydroxy-3-methylbutenyl diphosphate: step 1/1. It participates in isoprenoid biosynthesis; isopentenyl diphosphate biosynthesis via DXP pathway; isopentenyl diphosphate from 1-deoxy-D-xylulose 5-phosphate: step 6/6. Functionally, catalyzes the conversion of 1-hydroxy-2-methyl-2-(E)-butenyl 4-diphosphate (HMBPP) into a mixture of isopentenyl diphosphate (IPP) and dimethylallyl diphosphate (DMAPP). Acts in the terminal step of the DOXP/MEP pathway for isoprenoid precursor biosynthesis. The polypeptide is 4-hydroxy-3-methylbut-2-enyl diphosphate reductase (Clostridium perfringens (strain ATCC 13124 / DSM 756 / JCM 1290 / NCIMB 6125 / NCTC 8237 / Type A)).